The following is a 304-amino-acid chain: N-acetylmuramic acid 6-phosphate etherase (304 aa).

Positions 62–225 constitute an SIS domain; it reads IVQAFQNGGR…TTASMVMIGK (164 aa). E90 acts as the Proton donor in catalysis. E121 is an active-site residue.

Belongs to the GCKR-like family. MurNAc-6-P etherase subfamily. Homodimer.

The catalysed reaction is N-acetyl-D-muramate 6-phosphate + H2O = N-acetyl-D-glucosamine 6-phosphate + (R)-lactate. Its pathway is amino-sugar metabolism; 1,6-anhydro-N-acetylmuramate degradation. The protein operates within amino-sugar metabolism; N-acetylmuramate degradation. It functions in the pathway cell wall biogenesis; peptidoglycan recycling. In terms of biological role, specifically catalyzes the cleavage of the D-lactyl ether substituent of MurNAc 6-phosphate, producing GlcNAc 6-phosphate and D-lactate. Together with AnmK, is also required for the utilization of anhydro-N-acetylmuramic acid (anhMurNAc) either imported from the medium or derived from its own cell wall murein, and thus plays a role in cell wall recycling. The protein is N-acetylmuramic acid 6-phosphate etherase of Actinobacillus pleuropneumoniae serotype 5b (strain L20).